Reading from the N-terminus, the 207-residue chain is Large ribosomal subunit protein uL4 (207 aa).

Residues Thr-48–Gly-85 form a disordered region. The segment covering Gly-60 to Gly-71 has biased composition (basic residues).

It belongs to the universal ribosomal protein uL4 family. Part of the 50S ribosomal subunit.

In terms of biological role, one of the primary rRNA binding proteins, this protein initially binds near the 5'-end of the 23S rRNA. It is important during the early stages of 50S assembly. It makes multiple contacts with different domains of the 23S rRNA in the assembled 50S subunit and ribosome. Forms part of the polypeptide exit tunnel. The polypeptide is Large ribosomal subunit protein uL4 (Bacillus subtilis (strain 168)).